Consider the following 90-residue polypeptide: Large ribosomal subunit protein bL31B-1 (90 aa).

It belongs to the bacterial ribosomal protein bL31 family. Type B subfamily. As to quaternary structure, part of the 50S ribosomal subunit.

The polypeptide is Large ribosomal subunit protein bL31B-1 (Streptomyces coelicolor (strain ATCC BAA-471 / A3(2) / M145)).